A 33-amino-acid chain; its full sequence is Cytochrome b6-f complex subunit 8 (33 aa).

Residues 2 to 22 (LISLGWAALAATFTFSIAMVV) form a helical membrane-spanning segment.

It belongs to the PetN family. As to quaternary structure, the 4 large subunits of the cytochrome b6-f complex are cytochrome b6, subunit IV (17 kDa polypeptide, PetD), cytochrome f and the Rieske protein, while the 4 small subunits are PetG, PetL, PetM and PetN. The complex functions as a dimer.

It is found in the cellular thylakoid membrane. Component of the cytochrome b6-f complex, which mediates electron transfer between photosystem II (PSII) and photosystem I (PSI), cyclic electron flow around PSI, and state transitions. This is Cytochrome b6-f complex subunit 8 from Synechococcus sp. (strain RCC307).